A 543-amino-acid chain; its full sequence is Dipeptide-binding protein DppE (543 aa).

An N-terminal signal peptide occupies residues methionine 1–glycine 22. Cysteine 23 carries N-palmitoyl cysteine lipidation. Cysteine 23 carries S-diacylglycerol cysteine lipidation.

This sequence belongs to the bacterial solute-binding protein 5 family.

The protein localises to the cell membrane. Functionally, probably part of the ABC transporter DppBCDE involved in dipeptide transport. This Bacillus subtilis (strain 168) protein is Dipeptide-binding protein DppE (dppE).